The following is a 169-amino-acid chain: uncharacterized protein (169 aa).

This is an uncharacterized protein from Saimiriine herpesvirus 2 (strain 11) (SaHV-2).